Reading from the N-terminus, the 979-residue chain is Receptor-type tyrosine-protein phosphatase-like N (979 aa).

The first 37 residues, 1–37 (MRRPRRPGGSGGSGGSGGLRLLVCLLLLSGRPGGCSA), serve as a signal peptide directing secretion. The interval 38-134 (ISAHGCLFDR…HPRDRSGLVP (97 aa)) is RESP18 homology domain. Residues 38–575 (ISAHGCLFDR…RQAHGISPMR (538 aa)) lie on the Lumenal side of the membrane. An intrachain disulfide couples Cys-56 to Cys-65. A compositionally biased stretch (basic and acidic residues) spans 113–130 (MERIPRLRPPEPHPRDRS). Disordered regions lie at residues 113–173 (MERI…GSPL), 289–330 (GRAR…AAQP), and 392–443 (MQRG…SSSV). The span at 145–155 (TQGNPTGSSPA) shows a compositional bias: polar residues. The segment covering 303-322 (RAEDSSEGHEEEVLGGRGEK) has biased composition (basic and acidic residues). A phosphoserine mark is found at Ser-307 and Ser-308. A compositionally biased stretch (polar residues) spans 414-424 (SPASSEVQQVL). The segment at 449 to 575 (SPLGQSQPTV…RQAHGISPMR (127 aa)) is sufficient for dimerization of proICA512. Asn-506 and Asn-524 each carry an N-linked (GlcNAc...) asparagine glycan. Residues 576 to 600 (SVLLTLVALAGVAGLLVALAVALCM) traverse the membrane as a helical segment. The tract at residues 601-732 (RHHSRQRDKE…PNTCAAAQDE (132 aa)) is sufficient for dimerization of proICA512. Residues 601–979 (RHHSRQRDKE…VNAILKALPQ (379 aa)) lie on the Cytoplasmic side of the membrane. Positions 644-680 (RAEGQPEPSRVSSVSSQFSDAAQASPSSHSSTPSWCE) are disordered. Residues 648–677 (QPEPSRVSSVSSQFSDAAQASPSSHSSTPS) show a composition bias toward low complexity. A Tyrosine-protein phosphatase domain is found at 709 to 969 (LAKEWQALCA…EFALTAVAEE (261 aa)). Lys-754 participates in a covalent cross-link: Glycyl lysine isopeptide (Lys-Gly) (interchain with G-Cter in SUMO).

It belongs to the protein-tyrosine phosphatase family. Receptor class 8 subfamily. As to quaternary structure, homodimer; shown for the unprocessed protein (proICA512) in the endoplasmic reticulum and resolved during protein maturation as ICA512-TMF seems to be predominantly monomeric in secretory granules; however, ICA512-CCF interacts with ICA512-TMF disrupting the ICA512-TMF:SNTB2 complex. The isolated lumenal RESP18 homology domain has been shown to form disulfide-linked homooligomers. Interacts (via cytoplasmic domain) with phosphorylated SNTB2; this protects PTPRN against cleavage by CAPN1 to produce ICA512-CCF. Dephosphorylation of SNTB2 upon insulin stimulation disrupts the interaction and results in PTPRN cleavage. Interacts with SNX19. ICA512-CCF interacts with PIAS4; in the nucleus. Interacts with STAT5B (phosphorylated); down-regulated by ICA512-CCF sumoylation; ICA512-CCF prevents STAT5B dephosphorylation; ICA512-CCF mediates interaction of STAT5B with PIAS4. Interacts (via RESP18 homology domain) with insulin and proinsulin. Interacts with PTPRN2, PTPRA and PTPRE. Subject to proteolytic cleavage at multiple sites. Subject to cleavage on a pair of basic residues. On exocytosis of secretory granules in pancreatic beta-cells ICA512-TMF is transiently inserted in the plasma-membrane and cleaved by mu-type calpain CPN1 to yield ICA512-CCF. In terms of processing, O-glycosylated. Post-translationally, N-glycosylated. Sumoylated at two sites including Lys-754. Sumoylation decreases interaction with STAT5. As to expression, detected in pituitary. Detected in brain (at protein level). Detected in brain. Weakly expressed in the colon, intestine, stomach and pancreas.

The protein resides in the membrane. The protein localises to the cytoplasmic vesicle. It localises to the secretory vesicle membrane. Its subcellular location is the perikaryon. It is found in the cell projection. The protein resides in the axon. The protein localises to the synapse. It localises to the cell membrane. Its subcellular location is the endosome. It is found in the nucleus. In terms of biological role, plays a role in vesicle-mediated secretory processes. Required for normal accumulation of secretory vesicles in hippocampus, pituitary and pancreatic islets. Required for the accumulation of normal levels of insulin-containing vesicles and preventing their degradation. Plays a role in insulin secretion in response to glucose stimuli. Required for normal accumulation of the neurotransmitters norepinephrine, dopamine and serotonin in the brain. In females, but not in males, required for normal accumulation and secretion of pituitary hormones, such as luteinizing hormone (LH) and follicle-stimulating hormone (FSH). Seems to lack intrinsic enzyme activity. Required to maintain normal levels of renin expression and renin release. May regulate catalytic active protein-tyrosine phosphatases such as PTPRA through dimerization. Functionally, ICA512-TMF regulates dynamics and exocytosis of insulin secretory granules (SGs); binding of ICA512-TMF to SNTB2/beta-2-syntrophin is proposed to restrain SGs mobility and exocytosis by tethering them to the actin cytoskeleton depending on UTRN; the function is inhibited by cytoplasmic ICA512-CFF dimerizing with ICA512-TMF and displacing SNTB2. ICA512-CCF translocated to the nucleus promotes expression of insulin and other granule-related genes; the function implicates binding to and regulating activity of STAT5B probably by preventing its dephosphorylation and potentially by inducing its sumoylation by recruiting PIAS4. Enhances pancreatic beta-cell proliferation by converging with signaling by STAT5B and STAT3. ICA512-CCF located in the cytoplasm regulates dynamics and exocytosis of insulin secretory granules (SGs) by dimerizing with ICA512-TMF and displacing SNTB2 thus enhancing SGs mobility and exocytosis. The sequence is that of Receptor-type tyrosine-protein phosphatase-like N (Ptprn) from Mus musculus (Mouse).